Here is a 342-residue protein sequence, read N- to C-terminus: MKVTIKNINKEIYVFEVNGDLTVAELKNLISEKHNQTPSWQTLIYSGKILEDKRTLESYNITDSGFIVMMIKKPREAPATTPAPSTTPAPSTTSAPTTTTTAEPTPTTSSTNNTSTTTPTSVPTPTNNTPATPNPTPTTSSTPGSTSTTSPQQSSDFATGTELEATIKNITDMGFARDQVLRALRLTFNNAERAIEYLVSGNIPAANDPEDEEEMEGGGGSGDNPFEALRNHPHFNLLREAISKNPSIIPGILQQLAQTNPALVRQIQENPNEFIRLFQGDGNPGGNPGQFTLQVTQEESEAIQRLQALTGMDKSTVIEAYFACDKNEELTASYLFETADDE.

The 76-residue stretch at 1-76 (MKVTIKNINK…IVMMIKKPRE (76 aa)) folds into the Ubiquitin-like domain. The segment covering 77–151 (APATTPAPST…TPGSTSTTSP (75 aa)) has biased composition (low complexity). The segment at 77-157 (APATTPAPST…TTSPQQSSDF (81 aa)) is disordered. UBA domains follow at residues 161 to 201 (TELE…LVSG) and 297 to 338 (QEES…LFET).

The protein belongs to the RAD23 family.

Its subcellular location is the nucleus. The protein resides in the cytoplasm. Its function is as follows. May play a role both in proteasomal degradation of misfolded proteins and DNA repair. The chain is UV excision repair protein RAD23 homolog (rcbA) from Dictyostelium discoideum (Social amoeba).